A 293-amino-acid polypeptide reads, in one-letter code: 33 kDa chaperonin (293 aa).

Disulfide bonds link cysteine 238–cysteine 240 and cysteine 271–cysteine 274.

It belongs to the HSP33 family. Post-translationally, under oxidizing conditions two disulfide bonds are formed involving the reactive cysteines. Under reducing conditions zinc is bound to the reactive cysteines and the protein is inactive.

It is found in the cytoplasm. In terms of biological role, redox regulated molecular chaperone. Protects both thermally unfolding and oxidatively damaged proteins from irreversible aggregation. Plays an important role in the bacterial defense system toward oxidative stress. The protein is 33 kDa chaperonin of Staphylococcus aureus (strain USA300).